Here is a 249-residue protein sequence, read N- to C-terminus: DNA polymerase sliding clamp (249 aa).

Belongs to the PCNA family. In terms of assembly, homotrimer. The subunits circularize to form a toroid; DNA passes through its center. Replication factor C (RFC) is required to load the toroid on the DNA.

Functionally, sliding clamp subunit that acts as a moving platform for DNA processing. Responsible for tethering the catalytic subunit of DNA polymerase and other proteins to DNA during high-speed replication. This is DNA polymerase sliding clamp from Thermococcus sibiricus (strain DSM 12597 / MM 739).